A 681-amino-acid polypeptide reads, in one-letter code: Glutamine--fructose-6-phosphate aminotransferase [isomerizing] 1 (681 aa).

The active-site For GATase activity is Cys-2. The 286-residue stretch at 2-287 (CGIFAYLNYH…DDDVAAVVDG (286 aa)) folds into the Glutamine amidotransferase type-2 domain. Residues Ser-103 and Ser-243 each carry the phosphoserine modification. The segment at 295–662 (KRTARDHPGR…LQLLAFHLAV (368 aa)) is isomerase. SIS domains lie at 359 to 498 (HIKE…DRIS) and 530 to 671 (LATE…VDFP). Residues 376–377 (TS), 421–423 (SQS), Thr-426, and His-577 contribute to the substrate site.

As to quaternary structure, homotetramer, may also exist as homodimers.

It carries out the reaction D-fructose 6-phosphate + L-glutamine = D-glucosamine 6-phosphate + L-glutamate. The protein operates within nucleotide-sugar biosynthesis; UDP-N-acetyl-alpha-D-glucosamine biosynthesis; alpha-D-glucosamine 6-phosphate from D-fructose 6-phosphate: step 1/1. Its activity is regulated as follows. Inhibited by 4,4'-dithiodipyridine. Controls the flux of glucose into the hexosamine pathway. Most likely involved in regulating the availability of precursors for N- and O-linked glycosylation of proteins. Regulates the circadian expression of clock genes BMAL1 and CRY1. Has a role in fine tuning the metabolic fluctuations of cytosolic UDP-GlcNAc and its effects on hyaluronan synthesis that occur during tissue remodeling. The sequence is that of Glutamine--fructose-6-phosphate aminotransferase [isomerizing] 1 (Gfpt1) from Rattus norvegicus (Rat).